The primary structure comprises 1061 residues: DNA primase TraC (1061 aa).

The region spanning 850–938 (PALVIGEGYA…GKAIFPIFAP (89 aa)) is the Toprim domain. Residues 1034-1061 (EGQRQKVQQLKQQDIEQQEQRQRRARTY) are disordered.

In terms of biological role, required for autonomous replication in E.coli. Transferred into the recipient cell during bacterial conjugation. Catalyzes the synthesis of short oligoribonucleotide primers with CpA or pCpA at their 5'-termini on a single-stranded template DNA. In Escherichia coli, this protein is DNA primase TraC (traC).